The following is a 163-amino-acid chain: Phosphopantetheine adenylyltransferase (163 aa).

A substrate-binding site is contributed by Thr9. Residues 9-10 (TF) and His17 contribute to the ATP site. Positions 41, 73, and 87 each coordinate substrate. ATP is bound by residues 88–90 (GLR), Glu98, and 123–129 (FSFISSS).

The protein belongs to the bacterial CoaD family. As to quaternary structure, homohexamer. Mg(2+) serves as cofactor.

The protein resides in the cytoplasm. The catalysed reaction is (R)-4'-phosphopantetheine + ATP + H(+) = 3'-dephospho-CoA + diphosphate. It functions in the pathway cofactor biosynthesis; coenzyme A biosynthesis; CoA from (R)-pantothenate: step 4/5. Functionally, reversibly transfers an adenylyl group from ATP to 4'-phosphopantetheine, yielding dephospho-CoA (dPCoA) and pyrophosphate. The protein is Phosphopantetheine adenylyltransferase of Desulfitobacterium hafniense (strain DSM 10664 / DCB-2).